Reading from the N-terminus, the 501-residue chain is MSEELGLNDLLAVRREKLQNLEAEGANPFGGKFERTDTAQSMKEKYDAKSKEELEEETHEVVLAGRVMTKRGKGKAGFAHIQDLTGQIQIYVRKDAVGDKSYDLFTSIDIGDIVGVKGVAFKTKVGELSVKVQDFQLLTKSLRPLPDKYHGLKDVEQRYRQRYLDLIVNPEVRDTFVLRSKILQSMRRYLDDRGYLEVETPTMHSIPGGASARPFVTHHNALDMTLYMRIAIELHLKRLIVGGMEKVYEIGRVFRNEGVSTRHNPEFTMIELYEAYADYNDIMELTELLIAHIAKDVLGTTTITYGEHEVNLEPKWRRVHMVEAIKEETGVDFWNEMSDEEARALAKEHNVPVKETMTYGHVVNEFFEHFVEEKLIQPTFVYGHPVAISPLAKKNPDDPRFTDRFELFIVGREHANAFSELNDPIDQRHRFEQQLVEREQGDDEAHMMDEDFVESLEYGMPPTGGLGIGIDRLVMLLTNSPSIRDVLLFPQMRHKDSPATE.

Mg(2+) is bound by residues Glu406 and Glu413.

Belongs to the class-II aminoacyl-tRNA synthetase family. As to quaternary structure, homodimer. The cofactor is Mg(2+).

The protein localises to the cytoplasm. The catalysed reaction is tRNA(Lys) + L-lysine + ATP = L-lysyl-tRNA(Lys) + AMP + diphosphate. The protein is Lysine--tRNA ligase (lysS) of Halalkalibacterium halodurans (strain ATCC BAA-125 / DSM 18197 / FERM 7344 / JCM 9153 / C-125) (Bacillus halodurans).